Consider the following 229-residue polypeptide: 4-hydroxy-tetrahydrodipicolinate reductase (229 aa).

Residues 10-15 (GSAGRM), 78-80 (GTT), and 102-105 (SSNM) each bind NAD(+). The Proton donor/acceptor role is filled by histidine 133. Histidine 134 provides a ligand contact to (S)-2,3,4,5-tetrahydrodipicolinate. The active-site Proton donor is lysine 137. 143–144 (GT) contributes to the (S)-2,3,4,5-tetrahydrodipicolinate binding site.

It belongs to the DapB family.

It localises to the cytoplasm. It catalyses the reaction (S)-2,3,4,5-tetrahydrodipicolinate + NAD(+) + H2O = (2S,4S)-4-hydroxy-2,3,4,5-tetrahydrodipicolinate + NADH + H(+). It carries out the reaction (S)-2,3,4,5-tetrahydrodipicolinate + NADP(+) + H2O = (2S,4S)-4-hydroxy-2,3,4,5-tetrahydrodipicolinate + NADPH + H(+). It functions in the pathway amino-acid biosynthesis; L-lysine biosynthesis via DAP pathway; (S)-tetrahydrodipicolinate from L-aspartate: step 4/4. In terms of biological role, catalyzes the conversion of 4-hydroxy-tetrahydrodipicolinate (HTPA) to tetrahydrodipicolinate. The protein is 4-hydroxy-tetrahydrodipicolinate reductase of Bdellovibrio bacteriovorus (strain ATCC 15356 / DSM 50701 / NCIMB 9529 / HD100).